Here is a 202-residue protein sequence, read N- to C-terminus: Holliday junction branch migration complex subunit RuvA (202 aa).

The segment at 1 to 64 (MIGRLRGSLA…EDAHLLYGFY (64 aa)) is domain I. The interval 65–143 (EKRERELFRE…AWESLPGTFT (79 aa)) is domain II. The flexible linker stretch occupies residues 144–153 (LVSNGPNQAE). A domain III region spans residues 154–202 (PVASAESDAVSALISLGYKPQEASKAVSAIKEKDLSSADLIRRALKGMG).

This sequence belongs to the RuvA family. Homotetramer. Forms an RuvA(8)-RuvB(12)-Holliday junction (HJ) complex. HJ DNA is sandwiched between 2 RuvA tetramers; dsDNA enters through RuvA and exits via RuvB. An RuvB hexamer assembles on each DNA strand where it exits the tetramer. Each RuvB hexamer is contacted by two RuvA subunits (via domain III) on 2 adjacent RuvB subunits; this complex drives branch migration. In the full resolvosome a probable DNA-RuvA(4)-RuvB(12)-RuvC(2) complex forms which resolves the HJ.

The protein localises to the cytoplasm. In terms of biological role, the RuvA-RuvB-RuvC complex processes Holliday junction (HJ) DNA during genetic recombination and DNA repair, while the RuvA-RuvB complex plays an important role in the rescue of blocked DNA replication forks via replication fork reversal (RFR). RuvA specifically binds to HJ cruciform DNA, conferring on it an open structure. The RuvB hexamer acts as an ATP-dependent pump, pulling dsDNA into and through the RuvAB complex. HJ branch migration allows RuvC to scan DNA until it finds its consensus sequence, where it cleaves and resolves the cruciform DNA. The protein is Holliday junction branch migration complex subunit RuvA of Pseudomonas savastanoi pv. phaseolicola (strain 1448A / Race 6) (Pseudomonas syringae pv. phaseolicola (strain 1448A / Race 6)).